A 753-amino-acid chain; its full sequence is 5-methyltetrahydropteroyltriglutamate--homocysteine methyltransferase (753 aa).

Residues 17–20 (RELK) and Lys117 contribute to the 5-methyltetrahydropteroyltri-L-glutamate site. L-homocysteine-binding positions include 431 to 433 (IGS) and Glu484. Residues 431-433 (IGS) and Glu484 contribute to the L-methionine site. Residues 515 to 516 (RC) and Trp561 each bind 5-methyltetrahydropteroyltri-L-glutamate. L-homocysteine is bound at residue Asp599. Residue Asp599 coordinates L-methionine. Glu605 contacts 5-methyltetrahydropteroyltri-L-glutamate. 3 residues coordinate Zn(2+): His641, Cys643, and Glu665. Residue His694 is the Proton donor of the active site. Position 726 (Cys726) interacts with Zn(2+).

The protein belongs to the vitamin-B12 independent methionine synthase family. Zn(2+) serves as cofactor.

It carries out the reaction 5-methyltetrahydropteroyltri-L-glutamate + L-homocysteine = tetrahydropteroyltri-L-glutamate + L-methionine. Its pathway is amino-acid biosynthesis; L-methionine biosynthesis via de novo pathway; L-methionine from L-homocysteine (MetE route): step 1/1. Its function is as follows. Catalyzes the transfer of a methyl group from 5-methyltetrahydrofolate to homocysteine resulting in methionine formation. This chain is 5-methyltetrahydropteroyltriglutamate--homocysteine methyltransferase, found in Escherichia coli (strain SMS-3-5 / SECEC).